A 316-amino-acid polypeptide reads, in one-letter code: Acetyl-coenzyme A carboxylase carboxyl transferase subunit alpha (316 aa).

Residues 36 to 290 (PLRTQLETLR…GSVISRHLDD (255 aa)) form the CoA carboxyltransferase C-terminal domain.

Belongs to the AccA family. In terms of assembly, acetyl-CoA carboxylase is a heterohexamer composed of biotin carboxyl carrier protein (AccB), biotin carboxylase (AccC) and two subunits each of ACCase subunit alpha (AccA) and ACCase subunit beta (AccD).

It is found in the cytoplasm. It catalyses the reaction N(6)-carboxybiotinyl-L-lysyl-[protein] + acetyl-CoA = N(6)-biotinyl-L-lysyl-[protein] + malonyl-CoA. Its pathway is lipid metabolism; malonyl-CoA biosynthesis; malonyl-CoA from acetyl-CoA: step 1/1. Functionally, component of the acetyl coenzyme A carboxylase (ACC) complex. First, biotin carboxylase catalyzes the carboxylation of biotin on its carrier protein (BCCP) and then the CO(2) group is transferred by the carboxyltransferase to acetyl-CoA to form malonyl-CoA. This Deinococcus radiodurans (strain ATCC 13939 / DSM 20539 / JCM 16871 / CCUG 27074 / LMG 4051 / NBRC 15346 / NCIMB 9279 / VKM B-1422 / R1) protein is Acetyl-coenzyme A carboxylase carboxyl transferase subunit alpha.